Here is a 264-residue protein sequence, read N- to C-terminus: Glutamate racemase (264 aa).

Substrate-binding positions include 10-11 and 42-43; these read DS and YG. The active-site Proton donor/acceptor is Cys-73. 74–75 serves as a coordination point for substrate; the sequence is NT. The Proton donor/acceptor role is filled by Cys-183. 184-185 is a substrate binding site; it reads TH.

This sequence belongs to the aspartate/glutamate racemases family.

The enzyme catalyses L-glutamate = D-glutamate. Its pathway is cell wall biogenesis; peptidoglycan biosynthesis. Functionally, provides the (R)-glutamate required for cell wall biosynthesis. This chain is Glutamate racemase, found in Streptococcus uberis (strain ATCC BAA-854 / 0140J).